Reading from the N-terminus, the 234-residue chain is MGQKVNPVGLRLGINRNWTSRWFPSTRTAPSNIDEDNKIRKFLKKELYYAGVSEIVIERAAKKLRVTVVAARPGLIIGKKGVDIEKVKEGLKTLIKKEVSINIKEVKRPQADAQLAAENVATQLEKRVAFRRAMKKVMQAALKSGAKGIKVRVSGRLAGAEIARTEWYMEGRVPLHTLRAKIDYGFAEAMTVYGIIGVKVWIFKGEVLQKGIQFEKKEEAKEEREPRRSRRGRQ.

One can recognise a KH type-2 domain in the interval 39-107; sequence IRKFLKKELY…EVSINIKEVK (69 aa).

The protein belongs to the universal ribosomal protein uS3 family. Part of the 30S ribosomal subunit. Forms a tight complex with proteins S10 and S14.

In terms of biological role, binds the lower part of the 30S subunit head. Binds mRNA in the 70S ribosome, positioning it for translation. The chain is Small ribosomal subunit protein uS3 from Helicobacter pylori (strain J99 / ATCC 700824) (Campylobacter pylori J99).